Here is a 322-residue protein sequence, read N- to C-terminus: 4-diphosphocytidyl-2-C-methyl-D-erythritol kinase (322 aa).

Residue lysine 27 is part of the active site. 112–122 (PVAGGMAGGSA) lines the ATP pocket. Aspartate 154 is a catalytic residue.

The protein belongs to the GHMP kinase family. IspE subfamily.

The enzyme catalyses 4-CDP-2-C-methyl-D-erythritol + ATP = 4-CDP-2-C-methyl-D-erythritol 2-phosphate + ADP + H(+). It functions in the pathway isoprenoid biosynthesis; isopentenyl diphosphate biosynthesis via DXP pathway; isopentenyl diphosphate from 1-deoxy-D-xylulose 5-phosphate: step 3/6. In terms of biological role, catalyzes the phosphorylation of the position 2 hydroxy group of 4-diphosphocytidyl-2C-methyl-D-erythritol. This is 4-diphosphocytidyl-2-C-methyl-D-erythritol kinase from Mycolicibacterium smegmatis (strain ATCC 700084 / mc(2)155) (Mycobacterium smegmatis).